The chain runs to 308 residues: Leucine-rich repeat-containing protein 59 (308 aa).

Topologically, residues 1–248 are cytoplasmic; it reads MARANGRSQN…LARRQSRLRK (248 aa). LRR repeat units follow at residues 10–31, 40–61, 63–84, 86–107, and 109–128; these read NLRD…SEVP, KATA…FCNL, YIVR…FGRL, NLQH…FAQL, and SLKW…AKVA. Residues 154–223 adopt a coiled-coil conformation; the sequence is DHERELQRKL…NNNKKKAEEE (70 aa). Basic and acidic residues-rich tracts occupy residues 170–187, 194–203, and 218–237; these read KQRL…DREL, QQKERKRRDY, and KKAE…PKEK. The interval 170-240 is disordered; it reads KQRLEAQQRV…VPTPKEKKLA (71 aa). A helical transmembrane segment spans residues 249 to 269; that stretch reads IACILLFGLMVALLGVVACRF. Residues 270–308 lie on the Lumenal side of the membrane; the sequence is TDLKTFEVCRSVNAVYKETLSALHSNPVLERFLQDPSSQ.

As to quaternary structure, interacts with SGO1.

The protein localises to the microsome membrane. The protein resides in the endoplasmic reticulum membrane. It is found in the nucleus envelope. Its function is as follows. Required for nuclear import of FGF1. The protein is Leucine-rich repeat-containing protein 59 (lrrc59) of Xenopus tropicalis (Western clawed frog).